A 344-amino-acid chain; its full sequence is Heat-inducible transcription repressor HrcA (344 aa).

This sequence belongs to the HrcA family.

Functionally, negative regulator of class I heat shock genes (grpE-dnaK-dnaJ and groELS operons). Prevents heat-shock induction of these operons. This chain is Heat-inducible transcription repressor HrcA, found in Moorella thermoacetica (strain ATCC 39073 / JCM 9320).